We begin with the raw amino-acid sequence, 118 residues long: Basic phospholipase A2 PA-12A (118 aa).

Cystine bridges form between Cys-11/Cys-71, Cys-27/Cys-117, Cys-29/Cys-45, Cys-44/Cys-98, Cys-51/Cys-91, Cys-60/Cys-84, and Cys-78/Cys-89. Residues Tyr-28, Gly-30, and Gly-32 each coordinate Ca(2+). Residue His-48 is part of the active site. Asp-49 lines the Ca(2+) pocket. Residue Asp-92 is part of the active site.

This sequence belongs to the phospholipase A2 family. Group I subfamily. D49 sub-subfamily. Ca(2+) serves as cofactor. In terms of tissue distribution, expressed by the venom gland.

It localises to the secreted. The catalysed reaction is a 1,2-diacyl-sn-glycero-3-phosphocholine + H2O = a 1-acyl-sn-glycero-3-phosphocholine + a fatty acid + H(+). In terms of biological role, PLA2 catalyzes the calcium-dependent hydrolysis of the 2-acyl groups in 3-sn-phosphoglycerides. The protein is Basic phospholipase A2 PA-12A of Pseudechis australis (Mulga snake).